The following is a 347-amino-acid chain: Phosphoribosylformylglycinamidine cyclo-ligase (347 aa).

Belongs to the AIR synthase family.

The protein localises to the cytoplasm. The catalysed reaction is 2-formamido-N(1)-(5-O-phospho-beta-D-ribosyl)acetamidine + ATP = 5-amino-1-(5-phospho-beta-D-ribosyl)imidazole + ADP + phosphate + H(+). Its pathway is purine metabolism; IMP biosynthesis via de novo pathway; 5-amino-1-(5-phospho-D-ribosyl)imidazole from N(2)-formyl-N(1)-(5-phospho-D-ribosyl)glycinamide: step 2/2. In Yersinia pseudotuberculosis serotype O:1b (strain IP 31758), this protein is Phosphoribosylformylglycinamidine cyclo-ligase.